A 196-amino-acid chain; its full sequence is UMP-CMP kinase (196 aa).

13–18 (GAGKGT) contributes to the ATP binding site. The residue at position 33 (Ser33) is a Phosphoserine. Positions 33-63 (SAGELLRDERKNPDSQYGELIEKYIKEGKIV) are NMP. An a ribonucleoside 5'-phosphate-binding site is contributed by Arg39. Residues Lys43 and Lys55 each carry the N6-acetyllysine modification. A ribonucleoside 5'-phosphate is bound at residue 61–63 (KIV). Lys73 participates in a covalent cross-link: Glycyl lysine isopeptide (Lys-Gly) (interchain with G-Cter in SUMO2). 93–96 (GFPR) is a binding site for a ribonucleoside 5'-phosphate. Asn100 contacts CMP. An N6-succinyllysine modification is found at Lys106. The interval 133-143 (ERGKSSGRSDD) is LID. Arg134 provides a ligand contact to ATP. Positions 140 and 151 each coordinate a ribonucleoside 5'-phosphate. Lys179 contributes to the ATP binding site. At Ser180 the chain carries Phosphoserine.

It belongs to the adenylate kinase family. UMP-CMP kinase subfamily. Monomer. Mg(2+) is required as a cofactor.

It localises to the nucleus. The protein localises to the cytoplasm. It carries out the reaction CMP + ATP = CDP + ADP. It catalyses the reaction dCMP + ATP = dCDP + ADP. The enzyme catalyses UMP + ATP = UDP + ADP. The catalysed reaction is a 2'-deoxyribonucleoside 5'-diphosphate + ATP = a 2'-deoxyribonucleoside 5'-triphosphate + ADP. It carries out the reaction a ribonucleoside 5'-diphosphate + ATP = a ribonucleoside 5'-triphosphate + ADP. In terms of biological role, catalyzes the phosphorylation of pyrimidine nucleoside monophosphates at the expense of ATP. Plays an important role in de novo pyrimidine nucleotide biosynthesis. Has preference for UMP and CMP as phosphate acceptors. Also displays broad nucleoside diphosphate kinase activity. This chain is UMP-CMP kinase (Cmpk1), found in Mus musculus (Mouse).